A 776-amino-acid chain; its full sequence is Protein SEY1 (776 aa).

At 1 to 681 (MADRPAIQLI…KRSIITTRTH (681 aa)) the chain is on the cytoplasmic side. The region spanning 34–263 (GLDYHVISVF…TENYYFKPQY (230 aa)) is the GB1/RHD3-type G domain. 44 to 51 (GSQSSGKS) lines the GTP pocket. A helical membrane pass occupies residues 682–702 (IPPWIYVLLAVLGWNEFVAVI). Topologically, residues 703–705 (RNP) are lumenal. A helical membrane pass occupies residues 706–726 (LFVTLTLILGATFFVIHKFGL). Residues 727–776 (WGPVVNVVQSAVGETRTAIKDKLRQFVVEDHEVKESFEMKDFSKNEQKEK) lie on the Cytoplasmic side of the membrane.

It belongs to the TRAFAC class dynamin-like GTPase superfamily. GB1/RHD3 GTPase family. RHD3 subfamily. Interacts with RTN1 and YOP1; GTP binding is not required for these interactions.

It is found in the endoplasmic reticulum membrane. In terms of biological role, cooperates with the reticulon proteins RTN1 and RTN2 and the tubule-shaping DP1 family protein YOP1 to generate and maintain the structure of the tubular endoplasmic reticulum network. Has GTPase activity, which is required for its function in ER organization. The polypeptide is Protein SEY1 (Saccharomyces cerevisiae (strain ATCC 204508 / S288c) (Baker's yeast)).